Reading from the N-terminus, the 38-residue chain is Large ribosomal subunit protein bL36 (38 aa).

It belongs to the bacterial ribosomal protein bL36 family.

The polypeptide is Large ribosomal subunit protein bL36 (Chloroflexus aurantiacus (strain ATCC 29366 / DSM 635 / J-10-fl)).